The primary structure comprises 148 residues: NADH-quinone oxidoreductase subunit K 2 (148 aa).

The next 3 helical transmembrane spans lie at 3 to 23 (LAYP…GVLA), 28 to 48 (ILVL…LVAF), and 64 to 84 (LFTI…VLAV). A disordered region spans residues 96–148 (LRDTAETDAAETLPDDAGTGPSGTDAAPNGDTTTATGRPGDNAGKNKKAEATR).

Belongs to the complex I subunit 4L family. NDH-1 is composed of 14 different subunits. Subunits NuoA, H, J, K, L, M, N constitute the membrane sector of the complex.

The protein resides in the cell membrane. The catalysed reaction is a quinone + NADH + 5 H(+)(in) = a quinol + NAD(+) + 4 H(+)(out). Functionally, NDH-1 shuttles electrons from NADH, via FMN and iron-sulfur (Fe-S) centers, to quinones in the respiratory chain. The immediate electron acceptor for the enzyme in this species is believed to be a menaquinone. Couples the redox reaction to proton translocation (for every two electrons transferred, four hydrogen ions are translocated across the cytoplasmic membrane), and thus conserves the redox energy in a proton gradient. This Streptomyces griseus subsp. griseus (strain JCM 4626 / CBS 651.72 / NBRC 13350 / KCC S-0626 / ISP 5235) protein is NADH-quinone oxidoreductase subunit K 2.